Reading from the N-terminus, the 253-residue chain is uncharacterized protein (253 aa).

G7–T14 lines the ATP pocket.

The protein to M.jannaschii MJ0084 and MJ0823.

This is an uncharacterized protein from Methanocaldococcus jannaschii (strain ATCC 43067 / DSM 2661 / JAL-1 / JCM 10045 / NBRC 100440) (Methanococcus jannaschii).